The sequence spans 348 residues: Dihydroorotase (348 aa).

Residues His-14 and His-16 each contribute to the Zn(2+) site. Substrate contacts are provided by residues 16–18 and Asn-42; that span reads HLR. The Zn(2+) site is built by Lys-100, His-137, and His-175. Lys-100 is modified (N6-carboxylysine). His-137 contributes to the substrate binding site. Leu-220 is a binding site for substrate. Asp-248 contributes to the Zn(2+) binding site. Asp-248 is a catalytic residue. Residues His-252 and Ala-264 each contribute to the substrate site.

This sequence belongs to the metallo-dependent hydrolases superfamily. DHOase family. Class II DHOase subfamily. As to quaternary structure, homodimer. Zn(2+) is required as a cofactor.

The catalysed reaction is (S)-dihydroorotate + H2O = N-carbamoyl-L-aspartate + H(+). The protein operates within pyrimidine metabolism; UMP biosynthesis via de novo pathway; (S)-dihydroorotate from bicarbonate: step 3/3. Catalyzes the reversible cyclization of carbamoyl aspartate to dihydroorotate. The sequence is that of Dihydroorotase from Pseudomonas entomophila (strain L48).